The following is a 231-amino-acid chain: Uracil-DNA glycosylase (231 aa).

D70 (proton acceptor) is an active-site residue.

The protein belongs to the uracil-DNA glycosylase (UDG) superfamily. UNG family.

It localises to the cytoplasm. The catalysed reaction is Hydrolyzes single-stranded DNA or mismatched double-stranded DNA and polynucleotides, releasing free uracil.. In terms of biological role, excises uracil residues from the DNA which can arise as a result of misincorporation of dUMP residues by DNA polymerase or due to deamination of cytosine. The polypeptide is Uracil-DNA glycosylase (Pseudomonas fluorescens (strain Pf0-1)).